The primary structure comprises 210 residues: Large ribosomal subunit protein uL3 (210 aa).

The disordered stretch occupies residues Gly119–Arg143.

Belongs to the universal ribosomal protein uL3 family. In terms of assembly, part of the 50S ribosomal subunit. Forms a cluster with proteins L14 and L19.

Its function is as follows. One of the primary rRNA binding proteins, it binds directly near the 3'-end of the 23S rRNA, where it nucleates assembly of the 50S subunit. The polypeptide is Large ribosomal subunit protein uL3 (Lacticaseibacillus casei (strain BL23) (Lactobacillus casei)).